A 797-amino-acid chain; its full sequence is MTEIEACIKTVRTPYRRLFVFPSRIVAQGWLRQSLSLLGVRTVPGRLCLSWDEFKKRCFQCAPCAHRTPISEPLRLLFAHSVVQRNARQAAEGRALFCNLIPPAYAQDGAVFVQWLARILPQLGSWQRRVESHCMPPKDAVSRNTFDGRDARAYAQSAEAQDLQTLKAHYEQFLRAHALFEPSWDTPQFCAQGNTYVIVYPQLMQDFAEYAPVLQEAARATAGVLTFLPVPPFRQDTPLCCFSNVREEITAVALQVERLLRTGTPVSQIAVSVANLEELQPYVEREFRLRDIEPEVRAGFCLGAHPAGRMFSQLREFVRSHGTLKSVRALLLNPHIRWADPQGAQAVVQYGLQQACIRSWKQSGTYCNVWLQAFALHCERTEQERQHQQCAQRFFLTLLRFARALVEARSFVRMQKAYGAFRAACLLPASAHTSGAEEEIASSAFASCSAGEDDAVMARCVCVLQELAALERRFAHVVPPDPYSFFVQQLAQQMYVPVRAGVGLAIFPYRVAAAAPFLHHFVINVSHEASSVRYQRGTFLRADVRAAFGFEDEDVTEAFLSAYATAQTVYFSCSVQAFSGVQRPNRFFSNVHPPVSSTLTGRASQTPSPAGIASETGGAVPQYPAVRYEEDALQAEQDLYAQGAPVPSSLYRTQQERLRKAASLIPAAGRSYIRDSFAQALPPLTAVLHARHFHHAAVKVSQTDLNLFFRCPAAWFLERVLDVAPLSRRPRLVDPRVLGVFSHVVLERLYNRIACEDECFFSAHMERYRLWTQEAIEQVFSERAVRAGPLVWALRAA.

This is an uncharacterized protein from Treponema pallidum (strain Nichols).